Here is a 359-residue protein sequence, read N- to C-terminus: MSLEPTLRDLLHSKLQWIFVGGKGGVGKTTTSCALATLFASTPVHDAVTNTTRPRRVLLISTDPAHNLSDAFSQKFGKTPVPVNGMEETLFAMEVDPTTFTHGGFGAMLGFPGHIATDADAPSPFAALGNILKEAAGTLPGIDELSVFAEILRGVQQLSYDVVIFDTAPTGHTLRLLALPHTLNSTMEKLLSVEGLNTLIQAASAVLSSTTNLGDMSSLMPAFKQWRENVQEVQRQFTDAEKTAFICVCIPEFLSVYETERLVQELMKYDISCDSIVVNQLVLKPSSEPDCRMCNARQKIQSKYLAQIDSLYEDFHVVKMPLLSDEVRGVPALQRFAQFLLEPYDADRHGYIDVCGAAS.

23-30 (KGGVGKTT) provides a ligand contact to ATP. Aspartate 63 is a catalytic residue. Residues glutamate 252 and asparagine 279 each contribute to the ATP site. Zn(2+) contacts are provided by cysteine 291 and cysteine 294.

This sequence belongs to the arsA ATPase family. In terms of assembly, homodimer.

Its subcellular location is the cytoplasm. The protein localises to the endoplasmic reticulum. ATPase required for the post-translational delivery of tail-anchored (TA) proteins to the endoplasmic reticulum. Recognizes and selectively binds the transmembrane domain of TA proteins in the cytosol. This complex then targets to the endoplasmic reticulum by membrane-bound receptors, where the tail-anchored protein is released for insertion. This process is regulated by ATP binding and hydrolysis. ATP binding drives the homodimer towards the closed dimer state, facilitating recognition of newly synthesized TA membrane proteins. ATP hydrolysis is required for insertion. Subsequently, the homodimer reverts towards the open dimer state, lowering its affinity for the membrane-bound receptor, and returning it to the cytosol to initiate a new round of targeting. The polypeptide is ATPase ASNA1 homolog (Trypanosoma cruzi (strain CL Brener)).